We begin with the raw amino-acid sequence, 360 residues long: Cytokine receptor-like factor 2 (360 aa).

The signal sequence occupies residues 1 to 18 (MRAVTWAIVAMLLPRVLG). Over 27–238 (TGGVGDTLSV…PRTPGTPTPP (212 aa)) the chain is Extracellular. An N-linked (GlcNAc...) asparagine glycan is attached at N62. C77 and C90 are joined by a disulfide. One can recognise a Fibronectin type-III domain in the interval 123 to 214 (RPRPPWNVTL…PSKWTGVASL (92 aa)). 2 N-linked (GlcNAc...) asparagine glycosylation sites follow: N129 and N174. An intrachain disulfide couples C185 to C223. The WSXWS motif signature appears at 205-209 (PSKWT). A helical membrane pass occupies residues 239–259 (LALACGLAVALLTLVLLLALL). Residues 260–360 (RMRRVKEALL…LMGDSGYTTL (101 aa)) are Cytoplasmic-facing. Residues 268–276 (LLPGVPDPR) carry the Box 1 motif motif.

The protein belongs to the type I cytokine receptor family. Type 5 subfamily. Heterodimer of CRLF2 and IL7R. In terms of tissue distribution, expressed in all tissues examined including brain, thymus, lung, heart, muscle, stomach, small intestine, liver, kidney, spleen, testis and skin. Highest levels in thymus, liver and testis.

The protein resides in the membrane. Functionally, receptor for thymic stromal lymphopoietin (TSLP). Forms a functional complex with TSLP and IL7R which is capable of stimulating cell proliferation through activation of STAT3 and STAT5. Also activates JAK2. Implicated in the development of the hematopoietic system. The protein is Cytokine receptor-like factor 2 (Crlf2) of Rattus norvegicus (Rat).